Reading from the N-terminus, the 315-residue chain is Trimethylguanosine synthase (315 aa).

Residues 1-58 (MGRTFIHASKIKHAARKRKHHSNFRTLIKLLNNDAYKIESSKPLKNGKLFKYWKNRRR) form a required for correct nucleolar localization region. Asp-126 contributes to the S-adenosyl-L-methionine binding site. Positions 271–315 (TENSRRESSEKEELSSENEELSKRKKHESTTTTKDNTVDIYDVNG) are disordered. Over residues 273–284 (NSRRESSEKEEL) the composition is skewed to basic and acidic residues.

Belongs to the methyltransferase superfamily. Trimethylguanosine synthase family. As to quaternary structure, monomer. Interacts with the spliceosomal snRNP core component SMB1 and the snoRNP components CBF5 and NOP58.

It is found in the nucleus. It localises to the nucleolus. The enzyme catalyses a 5'-end (N(7)-methyl 5'-triphosphoguanosine)-ribonucleoside in snRNA + S-adenosyl-L-methionine = a 5'-end (N(2),N(7)-dimethyl 5'-triphosphoguanosine)-ribonucleoside in snRNA + S-adenosyl-L-homocysteine + H(+). The catalysed reaction is a 5'-end (N(7)-methyl 5'-triphosphoguanosine)-ribonucleoside in snoRNA + S-adenosyl-L-methionine = a 5'-end (N(2),N(7)-dimethyl 5'-triphosphoguanosine)-ribonucleoside in snoRNA + S-adenosyl-L-homocysteine + H(+). It carries out the reaction a 5'-end (N(2),N(7)-dimethyl 5'-triphosphoguanosine)-ribonucleoside in snRNA + S-adenosyl-L-methionine = a 5'-end (N(2),N(2),N(7)-trimethyl 5'-triphosphoguanosine)-ribonucleoside in snRNA + S-adenosyl-L-homocysteine + H(+). It catalyses the reaction a 5'-end (N(2),N(7)-dimethyl 5'-triphosphoguanosine)-ribonucleoside in snoRNA + S-adenosyl-L-methionine = a 5'-end (N(2),N(2),N(7)-trimethyl 5'-triphosphoguanosine)-ribonucleoside in snoRNA + S-adenosyl-L-homocysteine + H(+). With respect to regulation, substrate inhibited by S-adenosyl-L-homocysteine. Catalyzes the two serial methylation steps for the conversion of the 7-monomethylguanosine (m(7)G) caps of snRNAs and snoRNAs to a 2,2,7-trimethylguanosine (m(2,2,7)G) cap structure. The enzyme is specific for guanine, and N7 methylation must precede N2 methylation. Hypermethylates the m3G cap on TLC1 telomerase which affects telomere silencing and telomere length regulation. Required for pre-mRNA splicing, pre-rRNA processing and small ribosomal subunit synthesis. Involved in nucleolar structural organization. This chain is Trimethylguanosine synthase (TGS1), found in Saccharomyces cerevisiae (strain ATCC 204508 / S288c) (Baker's yeast).